The primary structure comprises 148 residues: MILKKCQFSEEREQIVAEAIRPVATELRLIDAADFIALLRFESYASIADLVESAAELYFLPGTVNFGLGGNYNLDWDSRPEVILDLELKPRGVTVYARLVLAGDTAGIEISHINFQQPSGDPDENTAFLAKSLAESKFVKTYPLPLAS.

To A.tumefaciens Atu0565/AGR_C_992.

This is an uncharacterized protein from Rhizobium meliloti (strain 1021) (Ensifer meliloti).